The sequence spans 141 residues: Putative nickel-responsive regulator (141 aa).

Residues His80, His91, His93, and Cys99 each contribute to the Ni(2+) site.

The protein belongs to the transcriptional regulatory CopG/NikR family. Ni(2+) is required as a cofactor.

Functionally, transcriptional regulator. This chain is Putative nickel-responsive regulator, found in Methanococcus maripaludis (strain C7 / ATCC BAA-1331).